The chain runs to 75 residues: uncharacterized protein (75 aa).

This is an uncharacterized protein from Rickettsia conorii (strain ATCC VR-613 / Malish 7).